Here is a 239-residue protein sequence, read N- to C-terminus: MTKAPIAGNRTGRKLGQRVKNKKMKASSRQWLERHINDPYVQRAQLEGYRARAAFKLLEIDEKHHILRGARRIIDLGAAPGSWSQIAAKVTGSTDDDIRVAAIDFLEMTQLPGVKILQLDFLDPSAPEKLLEAVGGTPDLVISDMAAPTTGHHRTDHLRTMHLCEVAAHFAVEVLGEGGHFLTKTFQGGTERELLAMLKQNFRQVVHVKPNSSRAESVEMFLLAKGFKGRKAEGEAEEA.

Residues 1 to 20 (MTKAPIAGNRTGRKLGQRVK) form a disordered region. Basic residues predominate over residues 11–20 (TGRKLGQRVK). S-adenosyl-L-methionine contacts are provided by G81, W83, D104, D120, and D144. Catalysis depends on K184, which acts as the Proton acceptor.

It belongs to the class I-like SAM-binding methyltransferase superfamily. RNA methyltransferase RlmE family.

It is found in the cytoplasm. The catalysed reaction is uridine(2552) in 23S rRNA + S-adenosyl-L-methionine = 2'-O-methyluridine(2552) in 23S rRNA + S-adenosyl-L-homocysteine + H(+). Functionally, specifically methylates the uridine in position 2552 of 23S rRNA at the 2'-O position of the ribose in the fully assembled 50S ribosomal subunit. The sequence is that of Ribosomal RNA large subunit methyltransferase E from Rhizobium johnstonii (strain DSM 114642 / LMG 32736 / 3841) (Rhizobium leguminosarum bv. viciae).